The chain runs to 231 residues: Cuticlin 2 (231 aa).

An N-terminal signal peptide occupies residues 1 to 16 (MQKLIVFFTTIAAAQA). A run of 12 repeats spans residues 75 to 78 (AAPI), 79 to 82 (AAPA), 90 to 93 (AAPV), 105 to 108 (AAPI), 114 to 117 (AAPA), 121 to 124 (AAPV), 137 to 140 (AAPA), 153 to 156 (AAPA), 169 to 172 (AAPA), 192 to 195 (AAPA), 208 to 211 (AAPA), and 218 to 221 (AAPA). A 12 X 4 AA repeats of A-A-P-[AVI] region spans residues 75–221 (AAPIAAPAGG…AGGYQAAAPA (147 aa)).

Post-translationally, tyrosine residues can be cross-linked in vitro, leading to the formation of insoluble high molecular-weight complexes.

The protein resides in the secreted. Its function is as follows. Component of the insoluble part of the cuticles. This chain is Cuticlin 2, found in Caenorhabditis elegans.